We begin with the raw amino-acid sequence, 345 residues long: Phosphate acyltransferase (345 aa).

Belongs to the PlsX family. In terms of assembly, homodimer. Probably interacts with PlsY.

It is found in the cytoplasm. It carries out the reaction a fatty acyl-[ACP] + phosphate = an acyl phosphate + holo-[ACP]. The protein operates within lipid metabolism; phospholipid metabolism. In terms of biological role, catalyzes the reversible formation of acyl-phosphate (acyl-PO(4)) from acyl-[acyl-carrier-protein] (acyl-ACP). This enzyme utilizes acyl-ACP as fatty acyl donor, but not acyl-CoA. This Levilactobacillus brevis (strain ATCC 367 / BCRC 12310 / CIP 105137 / JCM 1170 / LMG 11437 / NCIMB 947 / NCTC 947) (Lactobacillus brevis) protein is Phosphate acyltransferase.